Here is a 383-residue protein sequence, read N- to C-terminus: MAKHLFTSESVSEGHPDKIADQISDAVLDAILEQDPKARVACETYVKTGMVMVGGEVTTSAWVDIEELTRKTVREIGYTHSDMGFDADSCAVLNAIGKQSPDINQGVDRADPKEQGAGDQGLMFGYASNETDVLMPAPITYAHALVKRQSEVRKDNTLPWLRPDAKSQVTFAYEDNKIVGIDAVVLSTQHCDSVSQSDLIEGVMETIIKPVLPAQWLNKETKFFINPTGRFVIGGPMGDCGLTGRKIIVDTYGGMARHGGGAFSGKDPSKVDRSAAYAARYVAKNIVAAGLADRCEIQVSYAIGVAEPTSISVETFGTGKVSEEVLIGLVRQHFDLRPYGLTEMLDLARPIYKATAAYGHFGRNEFPWERTDKAEALRADAKL.

An ATP-binding site is contributed by His15. Asp17 serves as a coordination point for Mg(2+). K(+) is bound at residue Glu43. Glu56 and Gln99 together coordinate L-methionine. A flexible loop region spans residues 99–109 (QSPDINQGVDR). ATP-binding positions include 164–166 (DAK), 230–231 (RF), Asp239, 245–246 (RK), Ala262, and Lys266. Residue Asp239 participates in L-methionine binding. Position 270 (Lys270) interacts with L-methionine.

Belongs to the AdoMet synthase family. As to quaternary structure, homotetramer; dimer of dimers. Requires Mg(2+) as cofactor. K(+) is required as a cofactor.

It is found in the cytoplasm. The catalysed reaction is L-methionine + ATP + H2O = S-adenosyl-L-methionine + phosphate + diphosphate. It participates in amino-acid biosynthesis; S-adenosyl-L-methionine biosynthesis; S-adenosyl-L-methionine from L-methionine: step 1/1. Its function is as follows. Catalyzes the formation of S-adenosylmethionine (AdoMet) from methionine and ATP. The overall synthetic reaction is composed of two sequential steps, AdoMet formation and the subsequent tripolyphosphate hydrolysis which occurs prior to release of AdoMet from the enzyme. This chain is S-adenosylmethionine synthase, found in Shewanella loihica (strain ATCC BAA-1088 / PV-4).